A 224-amino-acid polypeptide reads, in one-letter code: NADH-quinone oxidoreductase subunit B (224 aa).

Positions 67, 68, 133, and 162 each coordinate [4Fe-4S] cluster. Positions 200 to 224 (DMPAEKDRKRGERIKVTNLRTPDEI) are disordered. Positions 201–224 (MPAEKDRKRGERIKVTNLRTPDEI) are enriched in basic and acidic residues.

This sequence belongs to the complex I 20 kDa subunit family. In terms of assembly, NDH-1 is composed of 14 different subunits. Subunits NuoB, C, D, E, F, and G constitute the peripheral sector of the complex. It depends on [4Fe-4S] cluster as a cofactor.

The protein localises to the cell inner membrane. The catalysed reaction is a quinone + NADH + 5 H(+)(in) = a quinol + NAD(+) + 4 H(+)(out). Functionally, NDH-1 shuttles electrons from NADH, via FMN and iron-sulfur (Fe-S) centers, to quinones in the respiratory chain. The immediate electron acceptor for the enzyme in this species is believed to be ubiquinone. Couples the redox reaction to proton translocation (for every two electrons transferred, four hydrogen ions are translocated across the cytoplasmic membrane), and thus conserves the redox energy in a proton gradient. The chain is NADH-quinone oxidoreductase subunit B from Aeromonas salmonicida (strain A449).